Here is a 467-residue protein sequence, read N- to C-terminus: MSERTLFDKVWDAHTVRVLPSGQTQLFIGLHLIHEVTSPQAFAMLRERNLPVLFPERTVATVDHIIPTDNRTRPFADPLAEEMIQELERNCRQYRIRFYNSGSGQQGIVHVIAPEQGLTQPGMTIACGDSHTSTHGAFGAIAFGIGTSQVRDVLATQTLALSKLKVRRIEVHGRLGPGVYAKDVILHIIRKLGVKGGVGYAYEYGGSTIEAMSMEERMTLCNMSIEGGARCGYVNPDAVTFEYLKGREFAPQGSDWEEAVAWWQSLASGPDAVYDDVVVFQAAEIAPTVTWGITPGQSIGVDERIPAPEELPESERELAKEAYAYMGLRPGDPIVGTPVDVCFIGSCTNGRLSDLREAAKIAKGQRVAPGVKAFVVPGSERVKQEAEREGLREIFEAAGFEWRDPGCSMCLAMNPDRLVGRQISASSSNRNFKGRQGSPSGRTLLMSPAMVAAAAVSGKVVDVRELL.

Cysteine 347, cysteine 407, and cysteine 410 together coordinate [4Fe-4S] cluster.

It belongs to the aconitase/IPM isomerase family. LeuC type 1 subfamily. In terms of assembly, heterodimer of LeuC and LeuD. [4Fe-4S] cluster serves as cofactor.

The catalysed reaction is (2R,3S)-3-isopropylmalate = (2S)-2-isopropylmalate. Its pathway is amino-acid biosynthesis; L-leucine biosynthesis; L-leucine from 3-methyl-2-oxobutanoate: step 2/4. Its function is as follows. Catalyzes the isomerization between 2-isopropylmalate and 3-isopropylmalate, via the formation of 2-isopropylmaleate. This Synechococcus sp. (strain JA-3-3Ab) (Cyanobacteria bacterium Yellowstone A-Prime) protein is 3-isopropylmalate dehydratase large subunit.